Here is a 201-residue protein sequence, read N- to C-terminus: MSRYRGPRVRIIRRLGVLPGLTNKTPQLKSSSANQSTAKKISQYRIRLEEKQKLRFHYGITERQLLNYVRIARKAKGSTGQILLQLLEMRLDNIVFRLGMAPTIPGARQLVNHRHVLVNDCIVDIPSYRCKPEDSITVKNRQKSQAIITKNIDFSQKSKVPNHLTFDSTQKKGLVNQILDRESIGLKINELLVVEYYSRQA.

Positions 89–150 (MRLDNIVFRL…RQKSQAIITK (62 aa)) constitute an S4 RNA-binding domain.

It belongs to the universal ribosomal protein uS4 family. Part of the 30S ribosomal subunit. Contacts protein S5. The interaction surface between S4 and S5 is involved in control of translational fidelity.

It localises to the plastid. Its subcellular location is the chloroplast. Its function is as follows. One of the primary rRNA binding proteins, it binds directly to 16S rRNA where it nucleates assembly of the body of the 30S subunit. Functionally, with S5 and S12 plays an important role in translational accuracy. The chain is Small ribosomal subunit protein uS4c (rps4) from Physcomitrium patens (Spreading-leaved earth moss).